Reading from the N-terminus, the 428-residue chain is MPSLKTLLRGVLVAAMLVAGSARAELNIEIIGGGASRHAISVLPFKDEGPTQGNLTPVIRNDLALSGAFRLIDPSAVANVPFEPADIRYPLWQAAGAQSLAIGKVESAGGGQIKISFRLMDASQRKQLTGGEFTVTPDRSRQVAHAIADMIYEAITGQKGFFNTRLAYVLKSGRSYALQISDVDGQRSQTILRSTEPIISPSWSPDGRHIAYVSFASQKPVVWVQDLATGQRRAVANFKGSNSAPAWSPDGSKLAVVLTTSGNSQIYIINAAGGPARRLMYNGGIDTEPAFSPDGSMVYFVSDRSGNPQIYRVPVNGGNAQRVTWEGAYNVSPKLSPDGKTLVYIRRSAGNFRVMSQDLATNDSRQLSDGSYSERPSFAPNGRMVLYSSDAGGQSVLYAATADGSSKVKLAVLNGDVQDPAWGPFNNP.

Positions 1–24 are cleaved as a signal peptide; the sequence is MPSLKTLLRGVLVAAMLVAGSARA.

This sequence belongs to the TolB family. The Tol-Pal system is composed of five core proteins: the inner membrane proteins TolA, TolQ and TolR, the periplasmic protein TolB and the outer membrane protein Pal. They form a network linking the inner and outer membranes and the peptidoglycan layer.

The protein resides in the periplasm. Its function is as follows. Part of the Tol-Pal system, which plays a role in outer membrane invagination during cell division and is important for maintaining outer membrane integrity. This is Tol-Pal system protein TolB from Chromobacterium violaceum (strain ATCC 12472 / DSM 30191 / JCM 1249 / CCUG 213 / NBRC 12614 / NCIMB 9131 / NCTC 9757 / MK).